We begin with the raw amino-acid sequence, 287 residues long: ATP synthase gamma chain (287 aa).

The protein belongs to the ATPase gamma chain family. In terms of assembly, F-type ATPases have 2 components, CF(1) - the catalytic core - and CF(0) - the membrane proton channel. CF(1) has five subunits: alpha(3), beta(3), gamma(1), delta(1), epsilon(1). CF(0) has three main subunits: a, b and c.

It localises to the cell inner membrane. Functionally, produces ATP from ADP in the presence of a proton gradient across the membrane. The gamma chain is believed to be important in regulating ATPase activity and the flow of protons through the CF(0) complex. This chain is ATP synthase gamma chain, found in Azotobacter vinelandii (strain DJ / ATCC BAA-1303).